Reading from the N-terminus, the 953-residue chain is Coatomer subunit beta (953 aa).

Threonine 2 is subject to N-acetylthreonine. 6 HEAT repeats span residues 96–131 (HEMILVCDAYRKDLQHPNEFIRGSTLRFLCKLKEAE), 132–168 (LLEPLMPAIRACLEHRHSYVRRNAVLAIYTIYRNFEH), 240–276 (SERARFIRCIYNLLQSSSPAVKYEAAGTLVTLSSAPT), 277–314 (AIKAAAQCYIDLIIKESDNNVKLIVLDRLIELKEHPAH), 316–353 (RVLQDLVMDILRVLSTPDLEVRKKTLQLALDLVSSRNV), and 396–433 (DMAANVIPVLMEFLSDNNEAAAADVLEFVREAIQRFDN). N6-acetyllysine is present on lysine 494.

As to quaternary structure, oligomeric complex that consists of at least the alpha, beta, beta', gamma, delta, epsilon and zeta subunits. Interacts (via C-terminus) with HIV-1 Nef; the interaction is direct. Interacts with CAPN8 and PRKCE. Interacts with SCYL1. Interacts with COPG1. Interacts with ARF1 (myristoylated); this interaction is required for binding of COPB1 to Golgi membranes. Interacts (via trunk domain) with ARF1 (via switch I region); the interaction is direct. Interacts with KCNK2 (via N-terminus); this interaction increases the channel-mediated whole cell currents and promotes plasma membrane expression of KCNK2. Interacts with anthrax lethal factor (LF); this interaction may facilitate endosomal vesicle membrane translocation of LF and its release from the lumen of endosomal vesicles to external milieu. Interacts with STX17. Interacts with TMEM115. Interacts with TMEM41B.

It is found in the cytoplasm. It localises to the golgi apparatus membrane. The protein localises to the cytoplasmic vesicle. The protein resides in the COPI-coated vesicle membrane. Its subcellular location is the cell membrane. It is found in the endoplasmic reticulum-Golgi intermediate compartment. In terms of biological role, the coatomer is a cytosolic protein complex that binds to dilysine motifs and reversibly associates with Golgi non-clathrin-coated vesicles, which further mediate biosynthetic protein transport from the ER, via the Golgi up to the trans Golgi network. Coatomer complex is required for budding from Golgi membranes, and is essential for the retrograde Golgi-to-ER transport of dilysine-tagged proteins. In mammals, the coatomer can only be recruited by membranes associated to ADP-ribosylation factors (ARFs), which are small GTP-binding proteins; the complex also influences the Golgi structural integrity, as well as the processing, activity, and endocytic recycling of LDL receptors. Plays a functional role in facilitating the transport of kappa-type opioid receptor mRNAs into axons and enhances translation of these proteins. Required for limiting lipid storage in lipid droplets. Involved in lipid homeostasis by regulating the presence of perilipin family members PLIN2 and PLIN3 at the lipid droplet surface and promoting the association of adipocyte surface triglyceride lipase (PNPLA2) with the lipid droplet to mediate lipolysis. Involved in the Golgi disassembly and reassembly processes during cell cycle. Involved in autophagy by playing a role in early endosome function. Plays a role in organellar compartmentalization of secretory compartments including endoplasmic reticulum (ER)-Golgi intermediate compartment (ERGIC), Golgi, trans-Golgi network (TGN) and recycling endosomes, and in biosynthetic transport of CAV1. Promotes degradation of Nef cellular targets CD4 and MHC class I antigens by facilitating their trafficking to degradative compartments. The sequence is that of Coatomer subunit beta (COPB1) from Pongo abelii (Sumatran orangutan).